Reading from the N-terminus, the 426-residue chain is Histidine--tRNA ligase (426 aa).

The protein belongs to the class-II aminoacyl-tRNA synthetase family. In terms of assembly, homodimer.

It localises to the cytoplasm. It catalyses the reaction tRNA(His) + L-histidine + ATP = L-histidyl-tRNA(His) + AMP + diphosphate + H(+). This is Histidine--tRNA ligase from Streptococcus pyogenes serotype M49 (strain NZ131).